Reading from the N-terminus, the 885-residue chain is MQTADIRNAWLTYFGDRGHTVVPSASLVSDDPTLLFTVAGMVPFVPYLTGVVPAPFARATSVQKCIRTLDIEEVGRTPRHGTFFQMNGNFSFGDYFKEQAIAYAWELLTTSEADGGLGFSPDDLWVTVYHEDDEARQAWKRIAGLPDERIQGLGRDTNYWHTGQPGPAGPCSEIFFDRGPAYGADGGPATDDDRYVEIWNLVFMQYLRGAGTGKSDFEILGDLPTRNIDTGMGLERVAFIKQGVENMYETDQVRPVLDRAAELSGRRYGADHEDDVRMRIVADHVRSSVMLMSDGVRPSNEGRGYILRRLMRRTVRAMRLMGVDAATFGELFPASRDAMKAAYPEVSDDFDRISRLAYAEEETFLRTLSGGTTILDVAVGETKAKGGERIAGDTAFLLHDTFGFPIDLTLEMAEENGLTVDREAFDRLMLEQRTRAKADAKSKKTALADLTVYSEFRAAGETRFTGYDELETGTTILGLIVGGHSVDHAVAGDIAEVILPETSLYAESGGQEADAGSIVGQGFDLEVLDVQKPVKGLISHRVQVRSGEVGVGDAATTIVDADWRRGATQAHSGTHLVHAALRQVLGQDAHQSGSYNRAGYMRLDFAWNQALSPATRSEIEDIANGAVRDDLQVVTRVMPIDEAKQLGAMALFGEKYGDTVRVVDIGGPWSRELCAGTHVSSSAQIGLINVVGESSVGSTNRRIESLVGREAFQDLAVERAIVSQLTSSLKTPREQLPDRIADLLQNLKTAERRIADFEAQALQQRVPTLLAQGSRVGSVTLIQESLGSVRSADEVRQLVTLVRERAGSDPVVVALAGDAGGKPTVIVATNQAARDAGAKAGQLARAAAAVLGGGGGGKDDLAQGGGSDVSAIGEALAAVRQALDS.

Residues H571, H575, C674, and H678 each contribute to the Zn(2+) site.

Belongs to the class-II aminoacyl-tRNA synthetase family. Zn(2+) is required as a cofactor.

The protein localises to the cytoplasm. It carries out the reaction tRNA(Ala) + L-alanine + ATP = L-alanyl-tRNA(Ala) + AMP + diphosphate. Catalyzes the attachment of alanine to tRNA(Ala) in a two-step reaction: alanine is first activated by ATP to form Ala-AMP and then transferred to the acceptor end of tRNA(Ala). Also edits incorrectly charged Ser-tRNA(Ala) and Gly-tRNA(Ala) via its editing domain. This Clavibacter sepedonicus (Clavibacter michiganensis subsp. sepedonicus) protein is Alanine--tRNA ligase.